A 284-amino-acid chain; its full sequence is 2-dehydro-3-deoxyphosphooctonate aldolase (284 aa).

This sequence belongs to the KdsA family.

It is found in the cytoplasm. The enzyme catalyses D-arabinose 5-phosphate + phosphoenolpyruvate + H2O = 3-deoxy-alpha-D-manno-2-octulosonate-8-phosphate + phosphate. It functions in the pathway carbohydrate biosynthesis; 3-deoxy-D-manno-octulosonate biosynthesis; 3-deoxy-D-manno-octulosonate from D-ribulose 5-phosphate: step 2/3. It participates in bacterial outer membrane biogenesis; lipopolysaccharide biosynthesis. The chain is 2-dehydro-3-deoxyphosphooctonate aldolase from Photorhabdus laumondii subsp. laumondii (strain DSM 15139 / CIP 105565 / TT01) (Photorhabdus luminescens subsp. laumondii).